Here is a 156-residue protein sequence, read N- to C-terminus: Transcriptional repressor NrdR (156 aa).

A zinc finger spans residues Cys-3–Cys-34. The region spanning Pro-49 to Glu-139 is the ATP-cone domain.

This sequence belongs to the NrdR family. Zn(2+) is required as a cofactor.

Functionally, negatively regulates transcription of bacterial ribonucleotide reductase nrd genes and operons by binding to NrdR-boxes. In Saccharophagus degradans (strain 2-40 / ATCC 43961 / DSM 17024), this protein is Transcriptional repressor NrdR.